Consider the following 121-residue polypeptide: Small ribosomal subunit protein bS6 (121 aa).

This sequence belongs to the bacterial ribosomal protein bS6 family.

Binds together with bS18 to 16S ribosomal RNA. The chain is Small ribosomal subunit protein bS6 from Rickettsia felis (strain ATCC VR-1525 / URRWXCal2) (Rickettsia azadi).